The primary structure comprises 255 residues: Taurine import ATP-binding protein TauB (255 aa).

The 228-residue stretch at 2–229 (LQISHLYADY…RFVAGESSRS (228 aa)) folds into the ABC transporter domain. Position 34 to 41 (34 to 41 (GPSGCGKT)) interacts with ATP.

This sequence belongs to the ABC transporter superfamily. Taurine importer (TC 3.A.1.17.1) family. The complex is composed of two ATP-binding proteins (TauB), two transmembrane proteins (TauC) and a solute-binding protein (TauA).

The protein resides in the cell inner membrane. The catalysed reaction is taurine(out) + ATP + H2O = taurine(in) + ADP + phosphate + H(+). Its function is as follows. Part of the ABC transporter complex TauABC involved in taurine import. Responsible for energy coupling to the transport system. The chain is Taurine import ATP-binding protein TauB from Shigella flexneri.